Here is a 75-residue protein sequence, read N- to C-terminus: MVTIKELLPYSYWIGHPVSNRAIVYLFVGFTPLTLETLHTLNYIILLNTKRWAPRSPHSDPARMRIPTQPRKAPL.

The interval 13–18 is important for viral replication in intestinal cells; it reads WIGHPV. The segment at 23-45 is a transmembrane helix; sequence IVYLFVGFTPLTLETLHTLNYII. Residues 53–75 form a disordered region; that stretch reads APRSPHSDPARMRIPTQPRKAPL.

It localises to the host cytoplasmic vesicle membrane. Facilitates virus release from intestinal cells in vitro, possibly through the host autophagic pathway. In Human enterovirus 71 (strain USA/BrCr/1970) (EV71), this protein is ORF2p protein.